The chain runs to 181 residues: Proteinase inhibitor A (181 aa).

Residues methionine 1–glycine 24 form the signal peptide. Intrachain disulfides connect cysteine 67-cysteine 113, cysteine 134-cysteine 143, and cysteine 136-cysteine 139.

It belongs to the protease inhibitor I3 (leguminous Kunitz-type inhibitor) family.

It localises to the secreted. In terms of biological role, possesses two reactive sites. Inhibits an equimolar amount of trypsin and chymotrypsin simultaneously, and inhibits kallikrein weakly. In Sagittaria sagittifolia (Arrowhead), this protein is Proteinase inhibitor A.